The sequence spans 546 residues: Chaperonin GroEL (546 aa).

ATP is bound by residues 29-32 (TMGP), Lys-50, 86-90 (DGTTT), Gly-414, and Asp-492.

This sequence belongs to the chaperonin (HSP60) family. As to quaternary structure, forms a cylinder of 14 subunits composed of two heptameric rings stacked back-to-back. Interacts with the co-chaperonin GroES.

Its subcellular location is the cytoplasm. The enzyme catalyses ATP + H2O + a folded polypeptide = ADP + phosphate + an unfolded polypeptide.. In terms of biological role, together with its co-chaperonin GroES, plays an essential role in assisting protein folding. The GroEL-GroES system forms a nano-cage that allows encapsulation of the non-native substrate proteins and provides a physical environment optimized to promote and accelerate protein folding. This Helicobacter acinonychis (strain Sheeba) protein is Chaperonin GroEL.